We begin with the raw amino-acid sequence, 120 residues long: Large ribosomal subunit protein bL19 (120 aa).

It belongs to the bacterial ribosomal protein bL19 family.

Its function is as follows. This protein is located at the 30S-50S ribosomal subunit interface and may play a role in the structure and function of the aminoacyl-tRNA binding site. The chain is Large ribosomal subunit protein bL19 from Rippkaea orientalis (strain PCC 8801 / RF-1) (Cyanothece sp. (strain PCC 8801)).